A 1801-amino-acid chain; its full sequence is MSEILCQWLNQELKVSRTVSPKSFAKTFSNGYLIGEVLFKFELQSDFSEFSESRVSTAKLNNFSRLQPTLHLLGVQFDQNVAQSIITEKPGAATKLLYQLYIALQKKKKTGLTGLEIQTMQPQTNQRLQALKSEAFRERLKNLIPRQTDFNLMRVTCRFQEKCKQMKEDLARMHFEKFEKIQKLEEEQRHFNIEKQRLNRRRQNEIMAKIQAAIIQIPKPEPNRTLKAIEAQKLMKKKKEAEDVANEIKKFEALIKKDLQTRESISKTSLDTIDQTAAELLNTYSDDDYIKKIQKRLEEDAFAREQREKRRRRLLMDQLIAHEAQEEAYREEQLIHRLMRQSQQERRIAVQLMHVRHEKEVLWQNRIFREKQFEERRLKDFQDALDREAALTKQAKIDFAEQTLRAKEIHEKIAMERAQQRYEKHYGICAEILDQILDLCTKVADYRLLTNNLIPHKMMRDWKELFFSGNPIYEQTSHTHGQTESTEDHHVELNKRNLLDSKDYEDYKNMTGEWALPEDMANSSPPSNNNILGHVLLRLIENSYPSEKEVADTELPSFAVKGCLLGKTLSGKTTILKALQNDIPIQVLSIDTLVQEAIQAFNDGEKSSKAPSMHEDVKGDPEVDQKEMIIPQDKNELTDTQVPGEAAPQKEGTKSSDFEQFRPSNSFLSLSMRAQLGAKSELMLRRGKSVPDVLLVNILVNAIKKIPVNQSWVLDGFPMTVNQAKLLEEALTGYKRKSLQLKKKKAQMPTLALSPTTSKEVPFLPSAFDFAILLDISDNSSLARINDIIAKEISHEISHENVSGPTITSSEEKSEDRNLRDHIQHRIVGFLDNWPLLEEWFTEPRNILKKVNAEIDEAFLCQKIKEIFATEVSNKKIKVEKKLEEKETEKKSAVSPTEPPTPTPPLASEAEKEKEVHQAKPSGKGKTQSVSPKGKAQGGKISVKKSPIDSTEVSPTLIAMPTTKPGSEEWVYVTEPIPEELPSFLVPYWELIEKTYISHIKTVLRQLRESQHTVLSYLYETRTSFQEFLRRPDHKQDFVSQWQADFNSVPEDLWEDEETKAELHQRVNDLRDRLWDICEARKEEAEQERLDIINESWLQDYIGITMNHFFSLMQAEVNRFQDTKRLLQDYYRAMESRIPLEDNKKFTRIPLVQLDGKEISEHQLRIPLVPRISSSPENVSMRPKVKALLKGRFDPPLESLEANFEGDEKIVLDTWQQASLAISQMVAAEVHQRLAEEEKEQPQLDPKEKSPQSGTNKKAKKEKEQAKKEKEQAKKEKEQAKKEKEPPKKKMAEKKGKGKSSPVVEVSPVTITPEEMAEMERKNELKLKIKEEHLAALQTEEQATQFRLELIKSKALSILEDLVTKVIEVYRFMEKWLGKRYLNEMASIQKLTEVARYHIETATKIQNEIYLSQEDFYINGDIKVFPDPPPPTRPPPVEKEENGTLTIEQLDNLRDQFLDMAPKGIIGNKAFTDILLDLVTLNLGTNNLSSSWMHLTQLDLQEITSLLTVNTEFVDWRKFLMVAAMPWPIPLEEELLETLQRFKATDEAQTGTITFEQYKQAGLWFSGDEDIKIPENPLEPLPFNRQEHLIEFFFRLFADSEKDPPQLDYTQMLLYFACHPDTLEGVYRALSVAVGTHIFRQVETPMLTAEKTSISSVSPNEEFPEAEENSTREELKEEKDERDQKEEEIPENANTEKISMETLLKVFGGGNEVLDANRFASYLKTENIYSENLIKTFQDLGAKNLEPIEVNILLKHPYIQDLITNYVDYKIPDIKMILQRSEHAQGSDGERSPSRLTDEKK.

Residues 1–105 (MSEILCQWLN…LLYQLYIALQ (105 aa)) form the Calponin-homology (CH) domain. Coiled-coil stretches lie at residues 176 to 260 (EKFE…KDLQ) and 321 to 395 (AHEA…TKQA). Residues 632–659 (QDKNELTDTQVPGEAAPQKEGTKSSDFE) form a disordered region. 2 coiled-coil regions span residues 722–748 (NQAK…KAQM) and 869–895 (ATEV…SAVS). Composition is skewed to basic and acidic residues over residues 883 to 892 (LEEKETEKKS) and 909 to 918 (EAEKEKEVHQ). Residues 883 to 949 (LEEKETEKKS…KISVKKSPID (67 aa)) are disordered. Residues 1051-1077 (EDLWEDEETKAELHQRVNDLRDRLWDI) are a coiled coil. Composition is skewed to basic and acidic residues over residues 1233–1250 (RLAE…KEKS) and 1261–1295 (KEKE…AEKK). 3 disordered regions span residues 1233–1304 (RLAE…SPVV), 1651–1695 (KTSI…NANT), and 1781–1801 (SEHA…DEKK). Positions 1252-1286 (QSGTNKKAKKEKEQAKKEKEQAKKEKEQAKKEKEP) form a coiled coil. Residues 1305 to 1657 (EVSPVTITPE…TAEKTSISSV (353 aa)) are interaction with IFT20. Residues 1665 to 1695 (EAEENSTREELKEEKDERDQKEEEIPENANT) adopt a coiled-coil conformation. Residues 1669–1687 (NSTREELKEEKDERDQKEE) show a composition bias toward basic and acidic residues.

In terms of assembly, interacts (via C-terminus) with IFT20. Interacts with DYNC1I2. Predominantly expressed in ciliated tissues such as lung, trachea, testis, brain, and at lower levels in kidney and spleen.

The protein localises to the cell projection. It localises to the cilium. It is found in the flagellum. The protein resides in the cytoplasm. Its subcellular location is the golgi apparatus. Its function is as follows. Required for correct axoneme development in spermatozoa. Important for normal development of the manchette and sperm head morphology. Essential for male fertility. Plays a role in localization of the intraflagellar transport protein IFT20 to the manchette, suggesting function as an adapter for dynein-mediated protein transport during spermatogenesis. Also plays a role in bone growth where it seems to be required for normal osteoblast differentiation. The chain is Sperm flagellar protein 2 (Spef2) from Rattus norvegicus (Rat).